A 252-amino-acid polypeptide reads, in one-letter code: NAD-dependent protein deacetylase (252 aa).

The Deacetylase sirtuin-type domain occupies Asp2–Ile243. 8 residues coordinate NAD(+): Ala28, Thr32, Phe39, Arg40, Gln109, Ile111, Asp112, and His127. Phe39 is a binding site for nicotinamide. Nicotinamide contacts are provided by Ile111 and Asp112. His127 (proton acceptor) is an active-site residue. Cys135, Cys138, Cys148, and Cys150 together coordinate Zn(2+). Residues Thr188, Ser189, and Asn211 each coordinate NAD(+).

It belongs to the sirtuin family. Class U subfamily. Zn(2+) is required as a cofactor.

Its subcellular location is the cytoplasm. It catalyses the reaction N(6)-acetyl-L-lysyl-[protein] + NAD(+) + H2O = 2''-O-acetyl-ADP-D-ribose + nicotinamide + L-lysyl-[protein]. In terms of biological role, NAD-dependent protein deacetylase which modulates the activities of several enzymes which are inactive in their acetylated form. The protein is NAD-dependent protein deacetylase of Fusobacterium nucleatum subsp. nucleatum (strain ATCC 25586 / DSM 15643 / BCRC 10681 / CIP 101130 / JCM 8532 / KCTC 2640 / LMG 13131 / VPI 4355).